Here is a 57-residue protein sequence, read N- to C-terminus: COP9 signalosome complex subunit 9 (57 aa).

Thr26 carries the post-translational modification Phosphothreonine.

This sequence belongs to the CSN9 family. In terms of assembly, component of the CSN complex, composed of COPS1/GPS1, COPS2, COPS3, COPS4, COPS5, COPS6, COPS7 (COPS7A or COPS7B), COPS8 and COPS9. In the complex, it interacts directly with COPS3, COPS5 and COPS6.

The protein resides in the nucleus. It localises to the cytoplasm. Its subcellular location is the nucleoplasm. Component of the COP9 signalosome complex (CSN), a complex involved in various cellular and developmental processes. The CSN complex is an essential regulator of the ubiquitin (Ubl) conjugation pathway by mediating the deneddylation of the cullin subunits of SCF-type E3 ligase complexes, leading to decrease the Ubl ligase activity of SCF-type complexes such as SCF, CSA or DDB2. The complex is also involved in phosphorylation of p53/TP53, c-jun/JUN, IkappaBalpha/NFKBIA, ITPK1 and IRF8/ICSBP, possibly via its association with CK2 and PKD kinases. CSN-dependent phosphorylation of TP53 and JUN promotes and protects degradation by the Ubl system, respectively. Plays a role in cell proliferation. The protein is COP9 signalosome complex subunit 9 of Bos taurus (Bovine).